A 232-amino-acid polypeptide reads, in one-letter code: MAERHPERSTEAFFGRRRGKRLRSQQTAAVEKLLPRLKLDLSSPAPAALDSLFGKPLREIRLEIGFGGGEHLLNEIRRHPDVGFIGVEPFVNGMAKLVAALEGEAPPNLRLYDDDATKLLDWLPDSAISRIDLFYPDPWPKKRHWKRRFVNKANLDRFARVLCVDGQFRFASDIEGYVNWTLLACRAHPDFRWVAKSAEDWRHPYEGWPGTRYEAKAMREGRHPAYLTFVRV.

4 residues coordinate S-adenosyl-L-methionine: glutamate 63, glutamate 88, aspartate 115, and aspartate 137. Residue aspartate 137 is part of the active site. Substrate contacts are provided by residues lysine 141, aspartate 173, and 211 to 214; that span reads TRYE.

The protein belongs to the class I-like SAM-binding methyltransferase superfamily. TrmB family.

The enzyme catalyses guanosine(46) in tRNA + S-adenosyl-L-methionine = N(7)-methylguanosine(46) in tRNA + S-adenosyl-L-homocysteine. It functions in the pathway tRNA modification; N(7)-methylguanine-tRNA biosynthesis. Catalyzes the formation of N(7)-methylguanine at position 46 (m7G46) in tRNA. This is tRNA (guanine-N(7)-)-methyltransferase from Chelativorans sp. (strain BNC1).